The chain runs to 241 residues: MPKLELLPAVDVRDGQAVRLVHGESGSETSYGSPLEAALAWQSAGAEWLHLVDLDAAFGTGDNRALIAEVAGAMDIKVELSGGIRDDASLAAALATGCRRVNLGTAALETPEWVAKVIAEHGDKIAVGLDVRGTTLRGRGWTRDGGDLYETLARLDSEGCARYVVTDIAKDGTLEGPNLGLLRDVCAATDRPVVASGGVSSLDDLRAISLLVPEGVEGAIVGKALYAKAFTLEEALKAVAA.

The Proton acceptor role is filled by D11. D130 serves as the catalytic Proton donor.

It belongs to the HisA/HisF family.

The protein resides in the cytoplasm. The enzyme catalyses 1-(5-phospho-beta-D-ribosyl)-5-[(5-phospho-beta-D-ribosylamino)methylideneamino]imidazole-4-carboxamide = 5-[(5-phospho-1-deoxy-D-ribulos-1-ylimino)methylamino]-1-(5-phospho-beta-D-ribosyl)imidazole-4-carboxamide. It carries out the reaction N-(5-phospho-beta-D-ribosyl)anthranilate = 1-(2-carboxyphenylamino)-1-deoxy-D-ribulose 5-phosphate. The protein operates within amino-acid biosynthesis; L-histidine biosynthesis; L-histidine from 5-phospho-alpha-D-ribose 1-diphosphate: step 4/9. It functions in the pathway amino-acid biosynthesis; L-tryptophan biosynthesis; L-tryptophan from chorismate: step 3/5. In terms of biological role, involved in both the histidine and tryptophan biosynthetic pathways. In Streptomyces griseus subsp. griseus (strain JCM 4626 / CBS 651.72 / NBRC 13350 / KCC S-0626 / ISP 5235), this protein is Phosphoribosyl isomerase A.